We begin with the raw amino-acid sequence, 2670 residues long: MNEMSSFLHIGDIVSLYAEGSVNGFISTLGLVDDRCVVEPAAGDLDNPPKKFRDCLFKVCPMNRYSAQKQYWKAKQTKQDKEKIADVVLLQKLQHAAQMEQKQNDTENKKVHGDVVKYGSVIQLLHMKSNKYLTVNKRLPALLEKNAMRVTLDATGNEGSWLFIQPFWKLRSNGDNVVVGDKVILNPVNAGQPLHASNYELSDNVGCKEVNSVNCNTSWKINLFMQFRDHLEEVLKGGDVVRLFHAEQEKFLTCDEYRGKLQVFLRTTLRQSATSATSSNALWEVEVVHHDPCRGGAGHWNGLYRFKHLATGNYLAAEENPSYKGDVSDPKAAGPGAQSRTGRRNAGEKIKYRLVAVPHGNDIASLFELDPTTLQKTDSFVPRNSYVRLRHLCTNTWIQSTNAPIDVEEERPIRLMLGTCPTKEDKEAFAIVSVPVSEIRDLDFANDASSMLASAVEKLNEGFISQNDRRFVIQLLEDLVFFVSDVPNNGQNVLDIMVTKPNRERQKLMRDENILKQIFGILKAPFRDKGGEGPLVRLEELSDQKNAPYQYMFRLCYRVLRHSQEDYRKNQEHIAKQFGMMQSQIGYDILAEDTITALLHNNRKLLEKHITKTEVETFVSLVRKNREPRFLDYLSDLCVSNRIAIPVTQELICKCVLDPKNSDILIQTELRPVKEMAQSHEYLSIEYSEEEVWLTWTDRNNEHHEKSVRQLAQEARAGNAHDENVLSYYRYQLKLFARMCLDRQYLAIDEISKQLGVELLFLCMADEMLPFDLRASFCHLMLHVHVDRDPQELVTPVKFARLWTEIPTAITIKDYDSNLNASRDDKKNKFASTMEFVEDYLNNVVGEAVPFANDEKNILTFEVVSLAHNLIYFGFYSFSELLRLTRTLLGIIDCIQAPAAVLQAYEEPGGKNVRRSIQGVGHMMSTMVLSRKQSVFGASSLPTGVGVPEQLDRSKFEDNEHTVVMETKLKILEILQFILNVRLDYRISYLLSVFKKEFVEVFPMQDSGADGTAPAFDSSTANMNLDRIGEQAEAMFGVGKTSSMLEVDDEGGRMFLRVLLHLTMHDYPPLVSGALQLLFKHFSQRQEAMHTFKQVQLLISAQDVENYKVIKSELDRLRTMVEKSELWVDKKGSVKGEEGEAGASKDKKERPSDEEGFLQPHGEKSSENYQIVKGILERLNKMCGVGEQMRKKQQRLLKNMDAHKVMLDLLQIPYDKNDNKMMEILRYTHQFLQKFCAGNPGNQALLHKHLQLFLTPGLLEAETMQHIFLNNYQLCSEISEPVLQHFVHCWPTHGRHVQYLDFLHTVIKAEGKYVKKCQDMIMTELTNAGDDVVVFYNDKASLAHLLDMMKAARDGVEDHSPLMYHISLVDLLAACAEGKNVYTEIKCTSLLPLEDVVSVVTHEDCITEVKMAYVNFVNHCYVDTEVEMKEIYTSNHIWTLFENFTLDMALVCNKREKRLSDPTLEKYVLTVVLDTISAFFSSPFSENSTSLQTHQTIVVQLLQSTTRLLECPWLQQQHKGSVEACVRTLAMVAKSRAILLPMDLDAHMSALLSSGGSCSAAAQRSAANYKTATRTFPRVIPTANQWDYKNIIEKLQDIITALEERLKPLVQAELSVLVDMLHWPELLFLEGSEAYQRCESGGFLSKLIRHTKGLMESEEKLCVKVLRTLQQMLQKKSKYGDRGNQLRKMLLQNYLQNRKSGPRGELTDPTGSGVDQDWSAIAATQCRLDKEGATKLVCDLITSTKNEKIFQESIGLAIRLLDGGNTEIQKSFYNLMTSDKKSERFFKVLHDRMKRAQQETKSTVAVNMSDLGSQPREDREPADPTTKGRVSSFSMPSSSRYSLGPGLHRGHDVSERAQNNEMGTSVLIMRPILRFLQLLCENHNRDLQNFLRCQNNKTNYNLVCETLQFLDIMCGSTTGGLGLLGLYINEDNVGLVIQTLETLTEYCQGPCHENQTCIVTHESNGIDIITALILNDISPLCKYRMDLVLQLKDNASKLLLALMESRHDSENAERILISLRPQELVDVIKKAYLQEEERENSEVSPREVGHNIYILALQLSRHNKQLQHLLKPVKRIQEEEAEGISSMLSLNNKQLSQMLKSSAPAQEEEEDPLAYYENHTSQIEIVRQDRSMEQIVFPVPAICQFLTEETKHRLFTTTEQDEQGSKVSDFFDQSSFLHNEMEWQRRLRSMPLIYWFSRRMTLWGSISFNLAVFINIIIAFFYPYVEGASTGVLGSPLISLLFWILICFSIAALFTKHYSVRPLIVALVLRSIYYLGIGPTLNILGALNLTNKIVFVVSFVGNRGTFIRGYKAMVMDMEFLYHVGYILTSVLGLFAHELFYSILLFDLIYREETLFNVIKSVTRNGRSILLTALLALILVYLFSIVGFLFLKDDFILEVDRLPGNHSRASTLGMPHGAATFMGTCSGDKMDCVSEVSVPEILEEDEELDSTERACDTLLMCIVTVMNHGLRNGGGVGDILRKPSKDESLFPARVVYDLLFFFIVIIIVLNLIFGVIIDTFADLRSEKQKKEEILKTTCFICGLERDKFDNKTVSFEEHIKLEHNMWNYLYFIVLVRVKNKTDYTGPESYVAQMIKNKNLDWFPRMRAMSLVSGEGEGEQNEIRILQEKLGSTMKLVSHLTAQLNELKEQMTEQRKRRQRLGFVDVQNCMSR.

The Cytoplasmic segment spans residues 1 to 2201 (MNEMSSFLHI…LIYWFSRRMT (2201 aa)). MIR domains follow at residues 113 to 173 (GDVV…LRSN), 174 to 224 (GDNV…INLF), 232 to 288 (EEVL…VEVV), 295 to 372 (GGAG…LDPT), and 378 to 434 (DSFV…IVSV). Arg266, Thr268, Leu269, and Arg270 together coordinate 1D-myo-inositol 1,4,5-trisphosphate. Residues 321–344 (PSYKGDVSDPKAAGPGAQSRTGRR) are disordered. The 1D-myo-inositol 1,4,5-trisphosphate site is built by Arg503, Lys507, Arg510, Tyr567, Arg568, and Lys569. Arg743 is a binding site for Ca(2+). Phosphoserine occurs at positions 916 and 934. Ca(2+) contacts are provided by Glu1122 and Glu1125. Basic and acidic residues predominate over residues 1134 to 1153 (VKGEEGEAGASKDKKERPSD). 2 disordered regions span residues 1134–1164 (VKGE…HGEK) and 1807–1849 (NMSD…GLHR). Ser1813, Ser1832, and Ser1834 each carry phosphoserine. Residues 1831–1842 (SSFSMPSSSRYS) show a composition bias toward low complexity. Ca(2+)-binding residues include Glu1881 and Glu1945. ATP-binding residues include Ala1995, Glu2148, and Lys2151. A helical transmembrane segment spans residues 2202-2222 (LWGSISFNLAVFINIIIAFFY). At 2223–2233 (PYVEGASTGVL) the chain is on the extracellular side. The helical transmembrane segment at 2234-2254 (GSPLISLLFWILICFSIAALF) threads the bilayer. Residues 2255–2263 (TKHYSVRPL) lie on the Cytoplasmic side of the membrane. Residues 2264–2284 (IVALVLRSIYYLGIGPTLNIL) traverse the membrane as a helical segment. Over 2285–2324 (GALNLTNKIVFVVSFVGNRGTFIRGYKAMVMDMEFLYHVG) the chain is Extracellular. Residues 2325–2345 (YILTSVLGLFAHELFYSILLF) traverse the membrane as a helical segment. Residues 2346–2367 (DLIYREETLFNVIKSVTRNGRS) are Cytoplasmic-facing. A helical transmembrane segment spans residues 2368-2388 (ILLTALLALILVYLFSIVGFL). At 2389–2495 (FLKDDFILEV…ESLFPARVVY (107 aa)) the chain is on the extracellular side. Residues Cys2454 and Cys2460 are joined by a disulfide bond. Residues 2496 to 2516 (DLLFFFIVIIIVLNLIFGVII) form a helical membrane-spanning segment. The Cytoplasmic portion of the chain corresponds to 2517-2670 (DTFADLRSEK…FVDVQNCMSR (154 aa)). Positions 2537 and 2538 each coordinate ATP. A Zn(2+)-binding site is contributed by Cys2537. Residues Cys2540 and His2557 each coordinate Zn(2+). ATP contacts are provided by Lys2559, His2562, Asn2563, and Met2564. His2562 provides a ligand contact to Zn(2+). Thr2580 provides a ligand contact to Ca(2+). Residues Ser2608 and Ser2669 each carry the phosphoserine modification.

It belongs to the InsP3 receptor family. As to quaternary structure, homotetramer. Homodimer. Interacts with TRPC1 and TRPC3. Interacts with TRPC4. Interacts with TRPV4. Interacts with SIGMAR1. Interacts with AKT1 and PML. Interacts with IRAG2 (via coiled-coil domain). Interacts with CABP1. Interacts with TMBIM4/LFG4. Interacts with CEMIP. Interacts with TESPA1. Interacts with TMEM203. Interacts with BOK; regulates ITPR3 expression. Interacts with BCL2L10. Interacts with CHGA and CHGB. Phosphorylated by AKT1 on serine and/or threonine residues.

It is found in the endoplasmic reticulum membrane. Its subcellular location is the cytoplasmic vesicle. It localises to the secretory vesicle membrane. The catalysed reaction is Ca(2+)(in) = Ca(2+)(out). Its activity is regulated as follows. Inositol 1,4,5-trisphosphate-gated calcium channel is regulated by cytosolic calcium in a biphasic manner. At low concentrations, cytosolic calcium binds at a high-affinity juxtamembrane domain (JD) calcium binding site, allowing ITPR3 to activate by escaping a low-energy resting state through an ensemble of preactivated states. At high cytosolic calcium concentrations, ITPR3 preferentially enters an inhibited state stabilized by calcium binding at a second, low-affinity cytoplasmic domain (CD) calcium binding site. Its function is as follows. Inositol 1,4,5-trisphosphate-gated calcium channel that, upon 1D-myo-inositol 1,4,5-trisphosphate binding, transports calcium from the endoplasmic reticulum lumen to cytoplasm, thus releasing the intracellular calcium and therefore participates in cellular calcium ion homeostasis. 11D-myo-inositol 1,4,5-trisphosphate binds to the ligand-free channel without altering its global conformation, yielding the low-energy resting state, then progresses through resting-to preactivated transitions to the higher energy preactivated state, which increases affinity for calcium, promoting binding of the low basal cytosolic calcium at the juxtamembrane domain (JD) site, favoring the transition through the ensemble of high-energy intermediate states along the trajectory to the fully-open activated state. Upon opening, releases calcium in the cytosol where it can bind to the low-affinity cytoplasmic domain (CD) site and stabilizes the inhibited state to terminate calcium release. In Rattus norvegicus (Rat), this protein is Inositol 1,4,5-trisphosphate-gated calcium channel ITPR3.